A 244-amino-acid chain; its full sequence is Leucyl/phenylalanyl-tRNA--protein transferase (244 aa).

Belongs to the L/F-transferase family.

It localises to the cytoplasm. It catalyses the reaction N-terminal L-lysyl-[protein] + L-leucyl-tRNA(Leu) = N-terminal L-leucyl-L-lysyl-[protein] + tRNA(Leu) + H(+). The enzyme catalyses N-terminal L-arginyl-[protein] + L-leucyl-tRNA(Leu) = N-terminal L-leucyl-L-arginyl-[protein] + tRNA(Leu) + H(+). The catalysed reaction is L-phenylalanyl-tRNA(Phe) + an N-terminal L-alpha-aminoacyl-[protein] = an N-terminal L-phenylalanyl-L-alpha-aminoacyl-[protein] + tRNA(Phe). Its function is as follows. Functions in the N-end rule pathway of protein degradation where it conjugates Leu, Phe and, less efficiently, Met from aminoacyl-tRNAs to the N-termini of proteins containing an N-terminal arginine or lysine. This is Leucyl/phenylalanyl-tRNA--protein transferase from Janthinobacterium sp. (strain Marseille) (Minibacterium massiliensis).